A 471-amino-acid polypeptide reads, in one-letter code: Ribulose bisphosphate carboxylase large chain (471 aa).

A propeptide spanning residues 1-2 (MS) is cleaved from the precursor. At P3 the chain carries N-acetylproline. K14 carries the N6,N6,N6-trimethyllysine modification. Substrate is bound by residues N123 and T173. Catalysis depends on K175, which acts as the Proton acceptor. K177 contributes to the substrate binding site. The Mg(2+) site is built by K201, D203, and E204. Residue K201 is modified to N6-carboxylysine. H294 (proton acceptor) is an active-site residue. Substrate contacts are provided by R295, H327, and S379.

It belongs to the RuBisCO large chain family. Type I subfamily. Heterohexadecamer of 8 large chains and 8 small chains; disulfide-linked. The disulfide link is formed within the large subunit homodimers. Mg(2+) serves as cofactor. In terms of processing, the disulfide bond which can form in the large chain dimeric partners within the hexadecamer appears to be associated with oxidative stress and protein turnover.

It is found in the plastid. The protein localises to the chloroplast. It catalyses the reaction 2 (2R)-3-phosphoglycerate + 2 H(+) = D-ribulose 1,5-bisphosphate + CO2 + H2O. The catalysed reaction is D-ribulose 1,5-bisphosphate + O2 = 2-phosphoglycolate + (2R)-3-phosphoglycerate + 2 H(+). Its function is as follows. RuBisCO catalyzes two reactions: the carboxylation of D-ribulose 1,5-bisphosphate, the primary event in carbon dioxide fixation, as well as the oxidative fragmentation of the pentose substrate in the photorespiration process. Both reactions occur simultaneously and in competition at the same active site. This Drymophloeus subdistichus (Palm tree) protein is Ribulose bisphosphate carboxylase large chain.